A 417-amino-acid chain; its full sequence is Gamma-glutamyl phosphate reductase (417 aa).

Belongs to the gamma-glutamyl phosphate reductase family.

It is found in the cytoplasm. The catalysed reaction is L-glutamate 5-semialdehyde + phosphate + NADP(+) = L-glutamyl 5-phosphate + NADPH + H(+). It functions in the pathway amino-acid biosynthesis; L-proline biosynthesis; L-glutamate 5-semialdehyde from L-glutamate: step 2/2. Catalyzes the NADPH-dependent reduction of L-glutamate 5-phosphate into L-glutamate 5-semialdehyde and phosphate. The product spontaneously undergoes cyclization to form 1-pyrroline-5-carboxylate. The polypeptide is Gamma-glutamyl phosphate reductase (Desulfitobacterium hafniense (strain Y51)).